The primary structure comprises 275 residues: Large ribosomal subunit protein uL2 (275 aa).

Residues 218-275 are disordered; sequence RPQTRGSAMNPIDHPHGGGEGKTNSGRHPVSPWGMPTKGYKTRKKKASDKLIISKRKK. Residues 257 to 275 are compositionally biased toward basic residues; the sequence is YKTRKKKASDKLIISKRKK.

The protein belongs to the universal ribosomal protein uL2 family. Part of the 50S ribosomal subunit. Forms a bridge to the 30S subunit in the 70S ribosome.

In terms of biological role, one of the primary rRNA binding proteins. Required for association of the 30S and 50S subunits to form the 70S ribosome, for tRNA binding and peptide bond formation. It has been suggested to have peptidyltransferase activity; this is somewhat controversial. Makes several contacts with the 16S rRNA in the 70S ribosome. The polypeptide is Large ribosomal subunit protein uL2 (Sulfurovum sp. (strain NBC37-1)).